A 380-amino-acid polypeptide reads, in one-letter code: Lipid-A-disaccharide synthase (380 aa).

It belongs to the LpxB family.

The catalysed reaction is a lipid X + a UDP-2-N,3-O-bis[(3R)-3-hydroxyacyl]-alpha-D-glucosamine = a lipid A disaccharide + UDP + H(+). The protein operates within bacterial outer membrane biogenesis; LPS lipid A biosynthesis. Condensation of UDP-2,3-diacylglucosamine and 2,3-diacylglucosamine-1-phosphate to form lipid A disaccharide, a precursor of lipid A, a phosphorylated glycolipid that anchors the lipopolysaccharide to the outer membrane of the cell. The chain is Lipid-A-disaccharide synthase from Pseudomonas syringae pv. tomato (strain ATCC BAA-871 / DC3000).